The sequence spans 362 residues: Vignain (362 aa).

Residues 1-20 (MATKKLLWVVLSFSLVLGVA) form the signal peptide. A propeptide spans 21–131 (NSFDFHDKDL…YEKVVSVPPS (111 aa)) (activation peptide). 3 cysteine pairs are disulfide-bonded: Cys149/Cys191, Cys183/Cys224, and Cys282/Cys334. Residue Cys152 is part of the active site. Residues His288 and Asn309 contribute to the active site. Asn326 and Asn346 each carry an N-linked (GlcNAc...) asparagine glycan. Positions 359-362 (KDEL) match the Prevents secretion from ER motif.

It belongs to the peptidase C1 family. In terms of assembly, monomer.

It localises to the endoplasmic reticulum lumen. In terms of biological role, thought to be involved in the hydrolysis of stored seed proteins. In Phaseolus vulgaris (Kidney bean), this protein is Vignain.